Consider the following 359-residue polypeptide: Short chain dehydrogenase resG (359 aa).

5 residues coordinate NADP(+): K87, D110, N137, Y237, and K241. The active-site Proton donor is the Y237. The active-site Lowers pKa of active site Tyr is K241.

The protein belongs to the short-chain dehydrogenases/reductases (SDR) family.

It functions in the pathway antifungal biosynthesis. In terms of biological role, short chain dehydrogenase; part of the gene cluster that mediates the biosynthesis of the tetrahydropyranyl antifungal agent restricticin that acts as an inhibitor of CYP51 and blocks the ergosterol biosynthesis. The highly reducing polyketide synthase resH, the short chain dehydrogenase resG, the cyclase resF, the FAD-dependent monooxygenase resA and the enoylreductase resD are required to generate the first stable intermediate desmethylrestrictinol. ResH with resD biosynthesize the first polyketide chain intermediate that is reduced by resG, followed by epoxidation by resA before 6-endo cyclization via epoxide opening by resF leads to desmethylrestrictinol. The methyltransferase resE then catalyzes the C4 O-methylation of desmethylrestrictinol to produce restrictinol, and the nonribosomal peptide synthetase resC catalyzes the C3 esterification of restrictinol with glycine that leads to restricticin. The sequence is that of Short chain dehydrogenase resG from Aspergillus sclerotiorum.